A 659-amino-acid polypeptide reads, in one-letter code: Chaperone protein DnaK (659 aa).

Thr201 is modified (phosphothreonine; by autocatalysis). The span at 571 to 592 (RSALKEDAPTEKIKEASDELSR) shows a compositional bias: basic and acidic residues. The tract at residues 571 to 659 (RSALKEDAPT…DVEIVDKPND (89 aa)) is disordered. A compositionally biased stretch (low complexity) spans 600–613 (AMQSQSASAAANAQ).

The protein belongs to the heat shock protein 70 family.

Its function is as follows. Acts as a chaperone. This is Chaperone protein DnaK from Chlamydia abortus (strain DSM 27085 / S26/3) (Chlamydophila abortus).